The following is a 275-amino-acid chain: UPF0328 protein ECU05_0050 (275 aa).

Belongs to the UPF0328 family.

The chain is UPF0328 protein ECU05_0050 from Encephalitozoon cuniculi (strain GB-M1) (Microsporidian parasite).